We begin with the raw amino-acid sequence, 370 residues long: Asporin (370 aa).

An N-terminal signal peptide occupies residues 1 to 15 (MKVYVLLVFLTLCSA). Residue S45 is glycosylated (O-linked (GalNAc...) serine). Positions 56–92 (FFPFDLFSTCPFGCQCYSRVVHCSDLGLSSVPSNIPF) constitute an LRRNT domain. Intrachain disulfides connect C65–C71 and C69–C78. LRR repeat units follow at residues 93–114 (DTRM…DFKG), 117–138 (SLYA…AFLT), 141–163 (KLRR…PKSL), 164–183 (AELR…TFKG), 186–209 (ALHV…AFEG), 232–253 (TLLE…DFKR), 256–277 (DLQR…SLAN), 280–302 (RVRE…QELK), 303–324 (YLQI…DFCP), 332–354 (SLYS…PATF), and 355–370 (RCVL…NFRK). Residue N272 is glycosylated (N-linked (GlcNAc...) asparagine). Cysteines 323 and 356 form a disulfide.

Belongs to the small leucine-rich proteoglycan (SLRP) family. SLRP class I subfamily.

It is found in the secreted. The protein resides in the extracellular space. It localises to the extracellular matrix. The polypeptide is Asporin (ASPN) (Bos taurus (Bovine)).